The following is a 368-amino-acid chain: Germination protease (368 aa).

Residues 1–16 (MKKSELDVNQYLIRTD) constitute a propeptide that is removed on maturation.

This sequence belongs to the peptidase A25 family. Homotetramer. Post-translationally, autoproteolytically processed. The inactive tetrameric zymogen termed p46 autoprocesses to a smaller form termed p41, which is active only during spore germination.

The enzyme catalyses Endopeptidase action with P4 Glu or Asp, P1 preferably Glu &gt; Asp, P1' hydrophobic and P2' Ala.. Its function is as follows. Initiates the degradation of small, acid-soluble proteins during spore germination. The protein is Germination protease (gpr) of Bacillus subtilis (strain 168).